A 489-amino-acid chain; its full sequence is Cytochrome P450 monooxygenase tazI (489 aa).

Cys433 lines the heme pocket.

It belongs to the cytochrome P450 family. The cofactor is heme.

It participates in secondary metabolite biosynthesis. Cytochrome P450 monooxygenase; part of the gene cluster that mediates the biosynthesis of azaterrilone A and other azaphilones, a class of fungal metabolites characterized by a highly oxygenated pyrano-quinone bicyclic core and exhibiting a broad range of bioactivities. The first step of the pathway begins with the non-reducing polyketide synthase tazA that assembles one acetyl-CoA starter unit, five malonyl-CoA units, and catalyzes a series of Claisen condensations, methylation, PT-mediated cyclization, and finally releases the first hexaketide precursor through the R-domain. The tazA product then undergoes reduction on its terminal ketone and the following pyran-ring formation by yet undetermined enzyme(s). Dehydration and enoyl reduction, possibly involving the trans-enoyl reductase tazE leads to the next intermediate. TazD is predicted as an acetyltransferase and might catalyze the acetylation steps leading to the synthesis of azaterrilone A. Azaterrilone A is not the final product of the taz pathway and both the highly reducing polyketide synthase tazB and the dual enzyme tazHJ catalyze late steps of the pathway, leading to the production of the 2 final stereoisomers that contain additional polyketide modification whose structures have still to be determined. The protein is Cytochrome P450 monooxygenase tazI of Aspergillus terreus (strain NIH 2624 / FGSC A1156).